We begin with the raw amino-acid sequence, 303 residues long: tRNA dimethylallyltransferase (303 aa).

An ATP-binding site is contributed by 16 to 23 (GPTASGKS). 18–23 (TASGKS) is a binding site for substrate. The segment at 41–44 (DSMQ) is interaction with substrate tRNA. The tract at residues 141–161 (AEALHGELSARDPETAGRVRP) is disordered. The interaction with substrate tRNA stretch occupies residues 165 to 169 (QRIVR).

The protein belongs to the IPP transferase family. In terms of assembly, monomer. Requires Mg(2+) as cofactor.

The enzyme catalyses adenosine(37) in tRNA + dimethylallyl diphosphate = N(6)-dimethylallyladenosine(37) in tRNA + diphosphate. In terms of biological role, catalyzes the transfer of a dimethylallyl group onto the adenine at position 37 in tRNAs that read codons beginning with uridine, leading to the formation of N6-(dimethylallyl)adenosine (i(6)A). This chain is tRNA dimethylallyltransferase, found in Rhizobium meliloti (strain 1021) (Ensifer meliloti).